Reading from the N-terminus, the 207-residue chain is Granulocyte colony-stimulating factor (207 aa).

The signal sequence occupies residues 1 to 30; that stretch reads MAGPATQSPMKLMALQLLLWHSALWTVQEA. Intrachain disulfides connect Cys-69/Cys-75 and Cys-97/Cys-107. Thr-166 is a glycosylation site (O-linked (GalNAc...) threonine).

This sequence belongs to the IL-6 superfamily. As to quaternary structure, monomer. O-glycan consists of Gal-GalNAc disaccharide which can be modified with up to two sialic acid residues (done in recombinantly expressed G-CSF from CHO cells).

It localises to the secreted. Functionally, granulocyte/macrophage colony-stimulating factors are cytokines that act in hematopoiesis by controlling the production, differentiation, and function of 2 related white cell populations of the blood, the granulocytes and the monocytes-macrophages. This CSF induces granulocytes. The chain is Granulocyte colony-stimulating factor (CSF3) from Homo sapiens (Human).